We begin with the raw amino-acid sequence, 115 residues long: Transmembrane protein 218 (115 aa).

The next 3 membrane-spanning stretches (helical) occupy residues 5–25 (VLGVGAGVFILALLWVAVLLL), 38–58 (FSVIFLFFGAVIITSVLLLFP), and 81–101 (YVLLAFLSAIFLGGLFLVLIH).

The protein belongs to the TMEM218 family. Interacts with TMEM67.

The protein localises to the membrane. Its subcellular location is the cell projection. It is found in the cilium. May be involved in ciliary biogenesis or function. This is Transmembrane protein 218 (TMEM218) from Homo sapiens (Human).